A 284-amino-acid chain; its full sequence is Pantothenate synthetase (284 aa).

30–37 provides a ligand contact to ATP; the sequence is MGALHDGH. The Proton donor role is filled by His37. Gln61 provides a ligand contact to (R)-pantoate. Gln61 is a binding site for beta-alanine. Residue 147 to 150 participates in ATP binding; the sequence is GEKD. Gln153 provides a ligand contact to (R)-pantoate. ATP-binding positions include Val176 and 184-187; that span reads KSSR.

This sequence belongs to the pantothenate synthetase family. As to quaternary structure, homodimer.

Its subcellular location is the cytoplasm. The catalysed reaction is (R)-pantoate + beta-alanine + ATP = (R)-pantothenate + AMP + diphosphate + H(+). It participates in cofactor biosynthesis; (R)-pantothenate biosynthesis; (R)-pantothenate from (R)-pantoate and beta-alanine: step 1/1. In terms of biological role, catalyzes the condensation of pantoate with beta-alanine in an ATP-dependent reaction via a pantoyl-adenylate intermediate. This is Pantothenate synthetase from Chloroherpeton thalassium (strain ATCC 35110 / GB-78).